The chain runs to 142 residues: Prefoldin subunit alpha 1 (142 aa).

It belongs to the prefoldin subunit alpha family. In terms of assembly, heterohexamer of two alpha and four beta subunits.

It localises to the cytoplasm. Molecular chaperone capable of stabilizing a range of proteins. Seems to fulfill an ATP-independent, HSP70-like function in archaeal de novo protein folding. This Methanocaldococcus jannaschii (strain ATCC 43067 / DSM 2661 / JAL-1 / JCM 10045 / NBRC 100440) (Methanococcus jannaschii) protein is Prefoldin subunit alpha 1 (pfdA1).